The following is a 784-amino-acid chain: MAAVAAAPGPGEAGESEQDSKTTPGEWRLGELQCEPIVAVLDSERQSLIRCEMDSDTLEKAGPVVEQLGGSGTDQVYGIDKNSDFESVSVMDYKPPYRGINQERIAGENKKARHEQLPRHTFLQKEPTPMILSEVRDSGVHTEMCLEEATLSSNNDGSETSLNDPDCDIGSMGTSEGSVVTSGIGSLIPGSEVQVTLDHIIQDALVVSFCHGNRIFSGVLMDLSKRFGPHGIPVTVHPRREYKNKPVESIQEESKSFHEETLLKSEENVTPPEDVTPIQQSESCEIQNLWTTKPPPLFHEGAPYPPPLFIRDTYNQSIPQPPPRKIKRPKKKIYREEPTSIINAIKLRPRQVLCDKCKNNVVADKKEIRKVATDSYKTEEGKRRRHETITTVNKKLKTDHKVNGKGQHESQKRAGVTKVPNLAHGRGKVVKVPSQTSAAKTQLHTKKVLQNKNMDHVKAREVLKMAKEKAQKKQKVTTSSKNAHSKVHFTRRLQNSNSGTLPPRLRIKPQRYRNEENDSSLKPGLETLRSSKMGIKPQTRYSATRSAGEAPSEIQSPSNGPEEVSSEIQDTNVCVPPEEQDLQQTLGKRGSKSNITVYMAINQKKANSSSASVCSSDSTDDMKSSHSECSSTENFDFPPGSMHTPSSSSASSKEEKKLSNSLKIKMFSKNVSKCVTPDGRTICVGDIVWAKIYGFPWWPARILAITISRKDNGLLIRQEARISWFGSPTTSFLALSQLAPFLENFQSRFNKKRKGLYRKAITEAAKAAKQLTPEVRALLTQFET.

The segment covering 1-10 has biased composition (low complexity); that stretch reads MAAVAAAPGP. Disordered stretches follow at residues 1–29, 399–443, 468–570, and 609–655; these read MAAV…EWRL, DHKV…KTQL, EKAQ…EIQD, and SSAS…SKEE. The span at 399 to 412 shows a compositional bias: basic and acidic residues; that stretch reads DHKVNGKGQHESQK. The segment covering 433 to 442 has biased composition (polar residues); the sequence is PSQTSAAKTQ. A PWWP domain is found at 684–744; the sequence is VGDIVWAKIY…LSQLAPFLEN (61 aa).

It localises to the nucleus. Functionally, H2A.Z-specific chromatin binding protein which plays an important role in the neural crest cell differentiation and/or migration during early development and is essential for the development of the head and eye. Acts as an adapter between distinct nucleosome components (H3K36me3 or H2A.Z) and chromatin-modifying complexes, contributing to the regulation of the levels of histone acetylation at actively transcribed genes. The polypeptide is PWWP domain-containing protein 2A (pwwp2a) (Xenopus laevis (African clawed frog)).